A 215-amino-acid polypeptide reads, in one-letter code: Probable phosphoglycerate mutase GpmB (215 aa).

Substrate is bound by residues 8-15 (RHGETQWN), 21-22 (QG), R58, R60, 82-85 (ELNM), 104-105 (RR), and 151-152 (GI). Residue H9 is the Tele-phosphohistidine intermediate of the active site. E82 (proton donor/acceptor) is an active-site residue.

The protein belongs to the phosphoglycerate mutase family. GpmB subfamily.

It carries out the reaction (2R)-2-phosphoglycerate = (2R)-3-phosphoglycerate. It participates in carbohydrate degradation; glycolysis; pyruvate from D-glyceraldehyde 3-phosphate: step 3/5. This is Probable phosphoglycerate mutase GpmB from Escherichia coli O1:K1 / APEC.